The sequence spans 433 residues: MNAADESLGNVLLVGLGAVAIQVALDLRRHGAGRLGALNHPGRRSQRIAEALARGACLQLEGQGQHRWLSGNAALDVFHQDPAELRDDWQTLVLCVPADSYLDVVRGLPWERLGGVRTLLLVSAFIGANLLVRSALPAGCQATVLSLSSYYAATKVIDETQPLRALTKAVKRRVYLGSSRPDCPARETWRRVLAGSGVEVVPLATPEAAEGRNVTTYVHSPFFLGEFALARILSEQGPPGFMYKLYPEGPITPGAIGAMRRLWCELSELLRRMGAEPLNLLRFLNDDNYPVHETMLPRAAIDGFAEAGAERQEYLLFVRYAALLVDPFSPADEQGRHFDFSAVPFRRVSRDEDGLWRLPRVPLEDYRKLALIVALAAHFDLAMPQARSLLASYENAVSRFIDCQGASQCHPSLYPIDSRPAADAIYRQWCSTC.

Residues 7-27 form a helical membrane-spanning segment; that stretch reads SLGNVLLVGLGAVAIQVALDL. NAD(+) is bound by residues 16–19, 39–40, and Thr-154; these read LGAV and NH. The active-site Proton donor/acceptor is the His-219. Position 364 (Glu-364) interacts with NAD(+).

Belongs to the staphylopine dehydrogenase family. As to quaternary structure, homodimer. Interacts with CntL.

The protein localises to the cell membrane. The catalysed reaction is pseudopaline + NAD(+) + H2O = (2S)-2-amino-4-{[(1S)-1-carboxy-2-(1H-imidazol-4-yl)ethyl]amino}butanoate + 2-oxoglutarate + NADH + H(+). In terms of biological role, catalyzes the NADH-dependent reductive condensation of alpha-ketoglutarate to the intermediate formed by the adjacently encoded enzyme CntL, namely (2S)-2-amino-4-{[(1S)-1-carboxy-2-(1H-imidazol-4-yl)ethyl]amino}butanoate, leading to the production of pseudopaline. This is the last step in the biosynthesis of the metallophore pseudopaline, which is involved in the acquisition of nickel and zinc, and thus enables bacterial growth inside the host, where metal access is limited. Therefore, this enzyme probably contributes to Pseudomonas virulence. Can use neither pyruvate nor NADPH in place of alpha-ketoglutarate and NADH, respectively. The sequence is that of Pseudopaline synthase from Pseudomonas aeruginosa (strain UCBPP-PA14).